The primary structure comprises 375 residues: Pulmonary surfactant-associated protein D (375 aa).

The signal sequence occupies residues 1 to 20 (MLLFLLSALVLLTQPLGYLE). 2 positions are modified to S-nitrosocysteine: Cys-35 and Cys-40. The segment at 45 to 221 (SGLPGRDGRD…DKGAKGESGL (177 aa)) is disordered. Residues 46-222 (GLPGRDGRDG…KGAKGESGLP (177 aa)) form the Collagen-like domain. Residues 50-65 (RDGRDGREGPRGEKGD) are compositionally biased toward basic and acidic residues. Residues 66-86 (PGLPGAAGQAGMPGQAGPVGP) are compositionally biased toward low complexity. Pro-78 is subject to 4-hydroxyproline. The residue at position 87 (Lys-87) is a 5-hydroxylysine. Residue Asn-90 is glycosylated (N-linked (GlcNAc...) asparagine). Pro-96 bears the 4-hydroxyproline mark. Lys-99 carries the 5-hydroxylysine modification. Pro residues predominate over residues 105–114 (SGPPGPPGVP). Composition is skewed to low complexity over residues 116 to 132 (PAGREGPLGKQGNIGPQ) and 138 to 150 (KGEAGPKGEVGAP). 4-hydroxyproline occurs at positions 171 and 177. Basic and acidic residues predominate over residues 204 to 216 (KGDKGIPGDKGAK). Residues 223–252 (DVASLRQQVEALQGQVQHLQAAFSQYKKVE) adopt a coiled-coil conformation. One can recognise a C-type lectin domain in the interval 260–375 (VGEKIFKTAG…GEKRLVVCEF (116 aa)). Disulfide bonds link Cys-281–Cys-373 and Cys-351–Cys-365.

It belongs to the SFTPD family. Oligomeric complex of 4 set of homotrimers. Post-translationally, the N-terminus is blocked. In terms of processing, hydroxylation on proline residues within the sequence motif, GXPG, is most likely to be 4-hydroxy as this fits the requirement for 4-hydroxylation in vertebrates. S-nitrosylation at Cys-35 and Cys-40 alters the quaternary structure which results in a pro-inflammatory chemoattractive signaling activity with macrophages. As to expression, expressed in lung, brain, pancreas and adipose tissue (mainly mature adipocytes).

Its subcellular location is the secreted. It is found in the extracellular space. It localises to the extracellular matrix. The protein resides in the surface film. Contributes to the lung's defense against inhaled microorganisms, organic antigens and toxins. Interacts with compounds such as bacterial lipopolysaccharides, oligosaccharides and fatty acids and modulates leukocyte action in immune response. May participate in the extracellular reorganization or turnover of pulmonary surfactant. Binds strongly maltose residues and to a lesser extent other alpha-glucosyl moieties. The chain is Pulmonary surfactant-associated protein D (SFTPD) from Homo sapiens (Human).